The sequence spans 393 residues: MTTIGTPLRPNATKVMMLGSGELGKEVVIELQRLGVEVIAVDRYENAPAQQVAHRAYTISMLDGAALRALVEKEKPDFIVPEVEAIATATLVELEQEGYNVVPTAKATQLTMNREGIRRLAAEELGLKTSPYRFVDNLEDFKQAVAEIGIPCVVKPIMSSSGHGQSVIKSEDQIQQAWDYSQEGGRAGGGRVIVEGFIKFDYEITQLTVRHVNGTSFLAPIGHRQEDGDYRESWQPQAMSDLALKRAQETAERITTALGGRGIFGVELFVCGDEIIFNEVSPRPHDTGMVTMASQELSQFALHARAILGLPIPEIYQISPAASKAIVVEGKSNNMTFGNLDKVLEEIGTNIRLFGKGEVNGHRRLGVILARDENTEKALAKAERAYAKLAVQL.

N(1)-(5-phospho-beta-D-ribosyl)glycinamide is bound by residues Glu-22–Leu-23 and Glu-82. Residues Arg-114, Lys-155, Ser-160–Gln-165, Glu-195–Ile-198, and Glu-203 contribute to the ATP site. The ATP-grasp domain maps to Arg-119–Leu-308. Residues Glu-267 and Glu-279 each contribute to the Mg(2+) site. Residues Asp-286, Lys-356, and Arg-363–Arg-364 contribute to the N(1)-(5-phospho-beta-D-ribosyl)glycinamide site.

The protein belongs to the PurK/PurT family. In terms of assembly, homodimer.

The catalysed reaction is N(1)-(5-phospho-beta-D-ribosyl)glycinamide + formate + ATP = N(2)-formyl-N(1)-(5-phospho-beta-D-ribosyl)glycinamide + ADP + phosphate + H(+). It participates in purine metabolism; IMP biosynthesis via de novo pathway; N(2)-formyl-N(1)-(5-phospho-D-ribosyl)glycinamide from N(1)-(5-phospho-D-ribosyl)glycinamide (formate route): step 1/1. In terms of biological role, involved in the de novo purine biosynthesis. Catalyzes the transfer of formate to 5-phospho-ribosyl-glycinamide (GAR), producing 5-phospho-ribosyl-N-formylglycinamide (FGAR). Formate is provided by PurU via hydrolysis of 10-formyl-tetrahydrofolate. The polypeptide is Formate-dependent phosphoribosylglycinamide formyltransferase (Actinobacillus pleuropneumoniae serotype 5b (strain L20)).